The sequence spans 507 residues: Cyclin-dependent kinase-like 2 (507 aa).

In terms of domain architecture, Protein kinase spans 4–289 (YENLGLVGEG…CADLLHHDFF (286 aa)). ATP is bound by residues 10-18 (VGEGSYGMV) and K33. The short motif at 45-51 (KKIAMRE) is the [NKR]KIAxRE element. Catalysis depends on D126, which acts as the Proton acceptor. Residues 365–392 (KTEKGTRASNGSCLHDNGTSHKGLSSTS) are disordered.

The protein belongs to the protein kinase superfamily. CMGC Ser/Thr protein kinase family. CDC2/CDKX subfamily.

It is found in the cytoplasm. The protein resides in the nucleus. The catalysed reaction is L-seryl-[protein] + ATP = O-phospho-L-seryl-[protein] + ADP + H(+). It catalyses the reaction L-threonyl-[protein] + ATP = O-phospho-L-threonyl-[protein] + ADP + H(+). The sequence is that of Cyclin-dependent kinase-like 2 from Rattus norvegicus (Rat).